An 856-amino-acid chain; its full sequence is Valine--tRNA ligase (856 aa).

The 'HIGH' region signature appears at 47 to 57 (PTASGVLHIGH). A 'KMSKS' region motif is present at residues 578–582 (KMSKS). An ATP-binding site is contributed by Lys-581.

This sequence belongs to the class-I aminoacyl-tRNA synthetase family. ValS type 2 subfamily. Monomer.

The protein resides in the cytoplasm. It carries out the reaction tRNA(Val) + L-valine + ATP = L-valyl-tRNA(Val) + AMP + diphosphate. In terms of biological role, catalyzes the attachment of valine to tRNA(Val). As ValRS can inadvertently accommodate and process structurally similar amino acids such as threonine, to avoid such errors, it has a 'posttransfer' editing activity that hydrolyzes mischarged Thr-tRNA(Val) in a tRNA-dependent manner. The chain is Valine--tRNA ligase from Tropheryma whipplei (strain Twist) (Whipple's bacillus).